The primary structure comprises 951 residues: Valine--tRNA ligase (951 aa).

A 'HIGH' region motif is present at residues 42-52; sequence PNVTGSLHMGH. Residues 554-558 carry the 'KMSKS' region motif; the sequence is KMSKS. K557 provides a ligand contact to ATP. Residues 880–944 are a coiled coil; it reads AGLINKEDEL…AEAKAKLIEQ (65 aa).

Belongs to the class-I aminoacyl-tRNA synthetase family. ValS type 1 subfamily. As to quaternary structure, monomer.

It is found in the cytoplasm. It catalyses the reaction tRNA(Val) + L-valine + ATP = L-valyl-tRNA(Val) + AMP + diphosphate. Catalyzes the attachment of valine to tRNA(Val). As ValRS can inadvertently accommodate and process structurally similar amino acids such as threonine, to avoid such errors, it has a 'posttransfer' editing activity that hydrolyzes mischarged Thr-tRNA(Val) in a tRNA-dependent manner. The sequence is that of Valine--tRNA ligase from Shigella dysenteriae serotype 1 (strain Sd197).